A 251-amino-acid chain; its full sequence is Hydroxyacylglutathione hydrolase (251 aa).

Zn(2+) is bound by residues histidine 53, histidine 55, aspartate 57, histidine 58, histidine 110, aspartate 127, and histidine 165.

This sequence belongs to the metallo-beta-lactamase superfamily. Glyoxalase II family. As to quaternary structure, monomer. It depends on Zn(2+) as a cofactor.

The enzyme catalyses an S-(2-hydroxyacyl)glutathione + H2O = a 2-hydroxy carboxylate + glutathione + H(+). It functions in the pathway secondary metabolite metabolism; methylglyoxal degradation; (R)-lactate from methylglyoxal: step 2/2. Functionally, thiolesterase that catalyzes the hydrolysis of S-D-lactoyl-glutathione to form glutathione and D-lactic acid. The chain is Hydroxyacylglutathione hydrolase from Escherichia coli O17:K52:H18 (strain UMN026 / ExPEC).